The chain runs to 356 residues: 3-isopropylmalate dehydrogenase (356 aa).

73-86 contacts NAD(+); sequence GTQYDGLPREKRPE. Substrate-binding residues include Arg93, Arg103, Arg131, and Asp220. The Mg(2+) site is built by Asp220, Asp244, and Asp248. NAD(+) is bound at residue 278-290; the sequence is GSAPDIAGKGIAN.

The protein belongs to the isocitrate and isopropylmalate dehydrogenases family. LeuB type 1 subfamily. In terms of assembly, homodimer. The cofactor is Mg(2+). It depends on Mn(2+) as a cofactor.

Its subcellular location is the cytoplasm. The catalysed reaction is (2R,3S)-3-isopropylmalate + NAD(+) = 4-methyl-2-oxopentanoate + CO2 + NADH. It participates in amino-acid biosynthesis; L-leucine biosynthesis; L-leucine from 3-methyl-2-oxobutanoate: step 3/4. Catalyzes the oxidation of 3-carboxy-2-hydroxy-4-methylpentanoate (3-isopropylmalate) to 3-carboxy-4-methyl-2-oxopentanoate. The product decarboxylates to 4-methyl-2 oxopentanoate. The protein is 3-isopropylmalate dehydrogenase of Nitrosomonas europaea (strain ATCC 19718 / CIP 103999 / KCTC 2705 / NBRC 14298).